Reading from the N-terminus, the 517-residue chain is Cytochrome P450 monooxygenase bsc11 (517 aa).

The chain crosses the membrane as a helical span at residues 16–33 (ALPLTCTGLIIIFAFYLS). Asn-204 is a glycosylation site (N-linked (GlcNAc...) asparagine). Cys-448 is a binding site for heme.

Belongs to the cytochrome P450 family. Heme is required as a cofactor.

It localises to the membrane. The protein operates within mycotoxin biosynthesis. Its function is as follows. Cytochrome P450 monooxygenase; part of the gene cluster that mediates the biosynthesis of the diterpene glucoside brassicicene C. In the first step of the brassicicene C biosynthesis, the bifunctional diterpene synthase bsc8 that possesses both prenyl transferase and terpene cyclase activity, converts isopentenyl diphosphate and dimethylallyl diphosphate into geranylgeranyl diphosphate (GGDP) that is further converted into fusicocca-2,10(14)-diene, the first precursor for brassicicene C. Fusicocca-2,10(14)-diene is then substrate of cytochrome P450 monooxygenase bsc1 for hydroxylation at the C-8 position. Oxidation at C-16 position to aldehyde is then catalyzed by the cytochrome P450 monooyxygenase bsc7, yielding fusicocca-2,10(14)-diene-8-beta,16-diol. Follows the isomerization of the double bond and reduction of aldehyde to alcohol catalyzed by the short-chain dehydrogenase/reductase bsc3 to yield the diol compound fusicocca-1,10(14)-diene-8 beta,16-diol. The next step is the oxidation at the C-3 position of fusicocca-2,10(14)-diene-8-beta,16-diol catalyzed by the alpha-ketoglutarate dependent dioxygenase bsc9, to produce a triol compound. Methylation of the hydroxy group at position 16 is performed by the methyltransferase bsc6. 16-O-methylation is followed by oxidation at the C-13 position to ketone and an alkyl shift of the methyl group leads to brassicicene C. Although the probable acetyltransferase bsc4 is included in the gene cluster, no acetylation reactions are necessary for brassicicene C biosynthesis. However, the fact that brassicicene E, which is a structurally related compound having an acetoxy group at position 12, was previously isolated from another strain of A.brassicicola suggests that the ATCC 96836 strain might also produce a small amount of brassicicene E. This Alternaria brassicicola (Dark leaf spot agent) protein is Cytochrome P450 monooxygenase bsc11.